Consider the following 331-residue polypeptide: Phosphoribosylformylglycinamidine cyclo-ligase (331 aa).

Belongs to the AIR synthase family.

The protein resides in the cytoplasm. The catalysed reaction is 2-formamido-N(1)-(5-O-phospho-beta-D-ribosyl)acetamidine + ATP = 5-amino-1-(5-phospho-beta-D-ribosyl)imidazole + ADP + phosphate + H(+). The protein operates within purine metabolism; IMP biosynthesis via de novo pathway; 5-amino-1-(5-phospho-D-ribosyl)imidazole from N(2)-formyl-N(1)-(5-phospho-D-ribosyl)glycinamide: step 2/2. This chain is Phosphoribosylformylglycinamidine cyclo-ligase, found in Clostridium tetani (strain Massachusetts / E88).